Consider the following 123-residue polypeptide: Ribosome-binding factor A (123 aa).

The protein belongs to the RbfA family. Monomer. Binds 30S ribosomal subunits, but not 50S ribosomal subunits or 70S ribosomes.

It localises to the cytoplasm. Functionally, one of several proteins that assist in the late maturation steps of the functional core of the 30S ribosomal subunit. Associates with free 30S ribosomal subunits (but not with 30S subunits that are part of 70S ribosomes or polysomes). Required for efficient processing of 16S rRNA. May interact with the 5'-terminal helix region of 16S rRNA. In Variovorax paradoxus (strain S110), this protein is Ribosome-binding factor A.